A 256-amino-acid chain; its full sequence is 6-carboxyhexanoate--CoA ligase (256 aa).

Belongs to the BioW family. Homodimer. Mg(2+) is required as a cofactor.

The catalysed reaction is heptanedioate + ATP + CoA = 6-carboxyhexanoyl-CoA + AMP + diphosphate. It participates in metabolic intermediate metabolism; pimeloyl-CoA biosynthesis; pimeloyl-CoA from pimelate: step 1/1. Catalyzes the transformation of pimelate into pimeloyl-CoA with concomitant hydrolysis of ATP to AMP. This chain is 6-carboxyhexanoate--CoA ligase, found in Bacillus velezensis (strain DSM 23117 / BGSC 10A6 / LMG 26770 / FZB42) (Bacillus amyloliquefaciens subsp. plantarum).